The chain runs to 430 residues: Adenylosuccinate synthetase (430 aa).

Residues 12–18 (GDEGKGK) and 40–42 (GHT) contribute to the GTP site. The Proton acceptor role is filled by D13. Mg(2+)-binding residues include D13 and G40. IMP is bound by residues 13–16 (DEGK), 38–41 (NAGH), T128, R142, Q223, T238, and R302. The active-site Proton donor is the H41. 298–304 (TTTGRPR) contacts substrate. Residues R304, 330-332 (SID), and 412-414 (SVG) each bind GTP.

It belongs to the adenylosuccinate synthetase family. In terms of assembly, homodimer. Mg(2+) is required as a cofactor.

Its subcellular location is the cytoplasm. It catalyses the reaction IMP + L-aspartate + GTP = N(6)-(1,2-dicarboxyethyl)-AMP + GDP + phosphate + 2 H(+). It functions in the pathway purine metabolism; AMP biosynthesis via de novo pathway; AMP from IMP: step 1/2. Its function is as follows. Plays an important role in the de novo pathway of purine nucleotide biosynthesis. Catalyzes the first committed step in the biosynthesis of AMP from IMP. The protein is Adenylosuccinate synthetase of Streptococcus equi subsp. zooepidemicus (strain H70).